Here is a 184-residue protein sequence, read N- to C-terminus: UPF0302 protein OB1778 (184 aa).

Belongs to the UPF0302 family.

The polypeptide is UPF0302 protein OB1778 (Oceanobacillus iheyensis (strain DSM 14371 / CIP 107618 / JCM 11309 / KCTC 3954 / HTE831)).